A 180-amino-acid polypeptide reads, in one-letter code: Ribulose bisphosphate carboxylase small subunit, chloroplastic 1 (180 aa).

The N-terminal 56 residues, 1–56, are a transit peptide targeting the chloroplast; it reads MASSVLSSAAVATRSNVAQANMVAPFTGLKSAASFPVSRKQNLDITSIASNGGRVQ.

Belongs to the RuBisCO small chain family. As to quaternary structure, heterohexadecamer of 8 large and 8 small subunits.

It localises to the plastid. The protein resides in the chloroplast. Functionally, ruBisCO catalyzes two reactions: the carboxylation of D-ribulose 1,5-bisphosphate, the primary event in carbon dioxide fixation, as well as the oxidative fragmentation of the pentose substrate. Both reactions occur simultaneously and in competition at the same active site. Although the small subunit is not catalytic it is essential for maximal activity. The protein is Ribulose bisphosphate carboxylase small subunit, chloroplastic 1 of Nicotiana sylvestris (Wood tobacco).